The sequence spans 694 residues: Elongation factor G (694 aa).

The 280-residue stretch at 8–287 (EDYRNFGIMA…AVVSYLPSPI (280 aa)) folds into the tr-type G domain. Residues 17-24 (AHIDAGKT), 86-90 (DTPGH), and 140-143 (NKMD) contribute to the GTP site.

The protein belongs to the TRAFAC class translation factor GTPase superfamily. Classic translation factor GTPase family. EF-G/EF-2 subfamily.

The protein resides in the cytoplasm. Functionally, catalyzes the GTP-dependent ribosomal translocation step during translation elongation. During this step, the ribosome changes from the pre-translocational (PRE) to the post-translocational (POST) state as the newly formed A-site-bound peptidyl-tRNA and P-site-bound deacylated tRNA move to the P and E sites, respectively. Catalyzes the coordinated movement of the two tRNA molecules, the mRNA and conformational changes in the ribosome. The protein is Elongation factor G of Bartonella tribocorum (strain CIP 105476 / IBS 506).